The following is a 916-amino-acid chain: Bifunctional aspartokinase/homoserine dehydrogenase 2, chloroplastic (916 aa).

The transit peptide at 1-87 directs the protein to the chloroplast; sequence MATLKPSFTV…VDQVQIPKGE (87 aa). The interval 88–336 is aspartokinase; it reads MWSVHKFGGT…VNEAVILQTL (249 aa). The tract at residues 337-562 is interface; sequence SYQEAWEMSY…LSRTTLAMGI (226 aa). ACT domains lie at 412 to 487 and 493 to 570; these read VEGT…VIPN and AVGQ…LIGA. The homoserine dehydrogenase stretch occupies residues 563–916; that stretch reads VGPGLIGATL…RLASYLGAPS (354 aa). Isoleucine 568 contributes to the NAD(+) binding site. Positions 568, 600, 649, and 673 each coordinate NADP(+). An NADPH-binding site is contributed by isoleucine 568. NAD(+) is bound at residue threonine 649. NADPH contacts are provided by threonine 649 and lysine 673. 4 residues coordinate Na(+): glutamate 700, valine 703, alanine 705, and leucine 707. NADP(+) is bound by residues glycine 758 and glutamate 761. Glutamate 761 and aspartate 772 together coordinate L-homoserine. Residue lysine 776 is the Proton donor of the active site. Glycine 893 provides a ligand contact to NAD(+). Glycine 893 provides a ligand contact to NADP(+). Glycine 893 lines the NADPH pocket.

This sequence in the N-terminal section; belongs to the aspartokinase family. In the C-terminal section; belongs to the homoserine dehydrogenase family. In terms of assembly, homo- or heterodimer. It depends on a metal cation as a cofactor.

It is found in the plastid. It localises to the chloroplast. It carries out the reaction L-homoserine + NADP(+) = L-aspartate 4-semialdehyde + NADPH + H(+). The catalysed reaction is L-homoserine + NAD(+) = L-aspartate 4-semialdehyde + NADH + H(+). It catalyses the reaction L-aspartate + ATP = 4-phospho-L-aspartate + ADP. Its pathway is amino-acid biosynthesis; L-lysine biosynthesis via DAP pathway; (S)-tetrahydrodipicolinate from L-aspartate: step 1/4. The protein operates within amino-acid biosynthesis; L-methionine biosynthesis via de novo pathway; L-homoserine from L-aspartate: step 1/3. It participates in amino-acid biosynthesis; L-methionine biosynthesis via de novo pathway; L-homoserine from L-aspartate: step 3/3. It functions in the pathway amino-acid biosynthesis; L-threonine biosynthesis; L-threonine from L-aspartate: step 1/5. Its pathway is amino-acid biosynthesis; L-threonine biosynthesis; L-threonine from L-aspartate: step 3/5. Its activity is regulated as follows. Threonine interaction with Gln-443 leads to inhibition of aspartate kinase activity and facilitates the binding of a second threonine on Gln-524, leading to a partial inhibition of homoserine dehydrogenase activity (25% of activity remaining at saturation with threonine). Homoserine dehydrogenase activity is also partially inhibited by cysteine (15% of activity remaining at saturation with cysteine). No synergy between threonine and cysteine for the inhibition. 13-fold activation of aspartate kinase activity by cysteine, isoleucine, valine, serine and alanine at 2.5 mM and 4-fold activation by leucine at 2.5 mM, but no activation of homoserine dehydrogenase activity. Its function is as follows. Bifunctional aspartate kinase and homoserine dehydrogenase that catalyzes the first and the third steps toward the synthesis of lysine, methionine and threonine from aspartate. The polypeptide is Bifunctional aspartokinase/homoserine dehydrogenase 2, chloroplastic (AKHSDH2) (Arabidopsis thaliana (Mouse-ear cress)).